The chain runs to 23 residues: Apolipophorin-1 (23 aa).

Basic and acidic residues predominate over residues 1–15; the sequence is SVKSEVDNFDKHLKA. Residues 1 to 23 are disordered; sequence SVKSEVDNFDKHLKAESAPFNNE.

As to expression, expressed in hemolymph.

It is found in the secreted. In terms of biological role, constitutes the major component of lipophorin, which mediates transport for various types of lipids in hemolymph. Acts by forming lipoprotein particles that bind lipoproteins and lipids. The chain is Apolipophorin-1 from Galleria mellonella (Greater wax moth).